The sequence spans 631 residues: Probable electron transfer flavoprotein-ubiquinone oxidoreductase, mitochondrial (631 aa).

65-79 (VCIVGGGPAGLATAI) lines the FAD pocket. The [4Fe-4S] cluster site is built by Cys-574, Cys-600, Cys-603, and Cys-606. The 4Fe-4S ferredoxin-type domain maps to 591 to 620 (TRLQINSQNCIHCKTCDIKAPRQDITWKVP).

The protein belongs to the ETF-QO/FixC family. It depends on [4Fe-4S] cluster as a cofactor. FAD serves as cofactor.

It localises to the mitochondrion inner membrane. The catalysed reaction is a ubiquinone + reduced [electron-transfer flavoprotein] = a ubiquinol + oxidized [electron-transfer flavoprotein] + H(+). In terms of biological role, accepts electrons from ETF and reduces ubiquinone. This is Probable electron transfer flavoprotein-ubiquinone oxidoreductase, mitochondrial (CIR2) from Saccharomyces cerevisiae (strain ATCC 204508 / S288c) (Baker's yeast).